Consider the following 333-residue polypeptide: L-lactate dehydrogenase B chain (333 aa).

NAD(+) is bound by residues 29–57 (GQVG…LEDK) and Arg-99. Positions 106, 138, and 169 each coordinate substrate. Asn-138 is an NAD(+) binding site. His-193 (proton acceptor) is an active-site residue. Substrate is bound at residue Thr-248.

This sequence belongs to the LDH/MDH superfamily. LDH family. Homotetramer.

The protein resides in the cytoplasm. It catalyses the reaction (S)-lactate + NAD(+) = pyruvate + NADH + H(+). The protein operates within fermentation; pyruvate fermentation to lactate; (S)-lactate from pyruvate: step 1/1. In terms of biological role, interconverts simultaneously and stereospecifically pyruvate and lactate with concomitant interconversion of NADH and NAD(+). This chain is L-lactate dehydrogenase B chain (LDHB), found in Sceloporus woodi (Florida scrub lizard).